The following is a 316-amino-acid chain: 4-hydroxy-3-methylbut-2-enyl diphosphate reductase (316 aa).

Cys17 provides a ligand contact to [4Fe-4S] cluster. Residues His46 and His79 each contribute to the (2E)-4-hydroxy-3-methylbut-2-enyl diphosphate site. Residues His46 and His79 each coordinate dimethylallyl diphosphate. The isopentenyl diphosphate site is built by His46 and His79. Cys101 is a [4Fe-4S] cluster binding site. His129 provides a ligand contact to (2E)-4-hydroxy-3-methylbut-2-enyl diphosphate. His129 is a dimethylallyl diphosphate binding site. His129 is an isopentenyl diphosphate binding site. Glu131 functions as the Proton donor in the catalytic mechanism. A (2E)-4-hydroxy-3-methylbut-2-enyl diphosphate-binding site is contributed by Thr170. Residue Cys200 participates in [4Fe-4S] cluster binding. The (2E)-4-hydroxy-3-methylbut-2-enyl diphosphate site is built by Ser228, Ser229, Asn230, and Ser273. Dimethylallyl diphosphate-binding residues include Ser228, Ser229, Asn230, and Ser273. Isopentenyl diphosphate contacts are provided by Ser228, Ser229, Asn230, and Ser273.

The protein belongs to the IspH family. Requires [4Fe-4S] cluster as cofactor.

The enzyme catalyses isopentenyl diphosphate + 2 oxidized [2Fe-2S]-[ferredoxin] + H2O = (2E)-4-hydroxy-3-methylbut-2-enyl diphosphate + 2 reduced [2Fe-2S]-[ferredoxin] + 2 H(+). It catalyses the reaction dimethylallyl diphosphate + 2 oxidized [2Fe-2S]-[ferredoxin] + H2O = (2E)-4-hydroxy-3-methylbut-2-enyl diphosphate + 2 reduced [2Fe-2S]-[ferredoxin] + 2 H(+). Its pathway is isoprenoid biosynthesis; dimethylallyl diphosphate biosynthesis; dimethylallyl diphosphate from (2E)-4-hydroxy-3-methylbutenyl diphosphate: step 1/1. It participates in isoprenoid biosynthesis; isopentenyl diphosphate biosynthesis via DXP pathway; isopentenyl diphosphate from 1-deoxy-D-xylulose 5-phosphate: step 6/6. In terms of biological role, catalyzes the conversion of 1-hydroxy-2-methyl-2-(E)-butenyl 4-diphosphate (HMBPP) into a mixture of isopentenyl diphosphate (IPP) and dimethylallyl diphosphate (DMAPP). Acts in the terminal step of the DOXP/MEP pathway for isoprenoid precursor biosynthesis. This chain is 4-hydroxy-3-methylbut-2-enyl diphosphate reductase, found in Ruegeria pomeroyi (strain ATCC 700808 / DSM 15171 / DSS-3) (Silicibacter pomeroyi).